The sequence spans 140 residues: Ribosome maturation factor RimP (140 aa).

Belongs to the RimP family.

The protein resides in the cytoplasm. Functionally, required for maturation of 30S ribosomal subunits. This Campylobacter jejuni subsp. jejuni serotype O:2 (strain ATCC 700819 / NCTC 11168) protein is Ribosome maturation factor RimP.